A 41-amino-acid polypeptide reads, in one-letter code: Large ribosomal subunit protein bL36 (41 aa).

It belongs to the bacterial ribosomal protein bL36 family.

This Cereibacter sphaeroides (strain ATCC 17029 / ATH 2.4.9) (Rhodobacter sphaeroides) protein is Large ribosomal subunit protein bL36.